Consider the following 901-residue polypeptide: ABC transporter A family member 8 (901 aa).

7 consecutive transmembrane segments (helical) span residues 34 to 54 (LITI…LFDT), 315 to 335 (IASL…FPVI), 369 to 389 (FLLI…LIGL), 402 to 422 (VFFF…SAMF), 427 to 447 (TATV…IFLF), 460 to 477 (WIIA…RGLY), and 508 to 528 (CIML…DQII). Residues 586–823 (VLCNNLKKVY…YGGSYVLTVT (238 aa)) enclose the ABC transporter domain. Position 624 to 631 (624 to 631 (GPNGAGKT)) interacts with ATP.

This sequence belongs to the ABC transporter superfamily. ABCA family. CPR flippase (TC 3.A.1.211) subfamily.

It localises to the membrane. The polypeptide is ABC transporter A family member 8 (ABCA8) (Arabidopsis thaliana (Mouse-ear cress)).